We begin with the raw amino-acid sequence, 304 residues long: Aspartate carbamoyltransferase catalytic subunit (304 aa).

Carbamoyl phosphate-binding residues include arginine 57 and threonine 58. An L-aspartate-binding site is contributed by lysine 85. Residues arginine 107, histidine 134, and glutamine 137 each contribute to the carbamoyl phosphate site. Residues arginine 167 and arginine 216 each contribute to the L-aspartate site. Carbamoyl phosphate contacts are provided by alanine 260 and proline 261.

The protein belongs to the aspartate/ornithine carbamoyltransferase superfamily. ATCase family. Heterododecamer (2C3:3R2) of six catalytic PyrB chains organized as two trimers (C3), and six regulatory PyrI chains organized as three dimers (R2).

The catalysed reaction is carbamoyl phosphate + L-aspartate = N-carbamoyl-L-aspartate + phosphate + H(+). It functions in the pathway pyrimidine metabolism; UMP biosynthesis via de novo pathway; (S)-dihydroorotate from bicarbonate: step 2/3. In terms of biological role, catalyzes the condensation of carbamoyl phosphate and aspartate to form carbamoyl aspartate and inorganic phosphate, the committed step in the de novo pyrimidine nucleotide biosynthesis pathway. This is Aspartate carbamoyltransferase catalytic subunit from Fusobacterium nucleatum subsp. nucleatum (strain ATCC 25586 / DSM 15643 / BCRC 10681 / CIP 101130 / JCM 8532 / KCTC 2640 / LMG 13131 / VPI 4355).